A 148-amino-acid polypeptide reads, in one-letter code: Large ribosomal subunit protein bL28c (148 aa).

The N-terminal 71 residues, 1–71 (MAASGMLISN…PLKPSLQPVA (71 aa)), are a transit peptide targeting the chloroplast.

Component of the chloroplast large ribosomal subunit (LSU). Mature 70S chloroplast ribosomes of higher plants consist of a small (30S) and a large (50S) subunit. The 30S small subunit contains 1 molecule of ribosomal RNA (16S rRNA) and 24 different proteins. The 50S large subunit contains 3 rRNA molecules (23S, 5S and 4.5S rRNA) and 33 different proteins.

It localises to the plastid. The protein localises to the chloroplast. Functionally, component of the chloroplast ribosome (chloro-ribosome), a dedicated translation machinery responsible for the synthesis of chloroplast genome-encoded proteins, including proteins of the transcription and translation machinery and components of the photosynthetic apparatus. The polypeptide is Large ribosomal subunit protein bL28c (RPL28) (Spinacia oleracea (Spinach)).